The following is a 388-amino-acid chain: Gastricsin (388 aa).

Positions 1 to 16 (MKWLLVALVCLHLLEA) are cleaved as a signal peptide. A propeptide spans 17–59 (AVIKVPLRKFKSIRETLKEKGLLKEFLNTHKYDPALKYRFGDF) (activation peptide). The region spanning 73–385 (YFGEISIGTP…DMANNRVGFA (313 aa)) is the Peptidase A1 domain. D91 is an active-site residue. 2 cysteine pairs are disulfide-bonded: C104–C109 and C267–C271. The active site involves D276. A disulfide bond links C310 and C343.

Belongs to the peptidase A1 family.

It is found in the secreted. The catalysed reaction is More restricted specificity than pepsin A, but shows preferential cleavage at Tyr-|-Xaa bonds. High activity on hemoglobin.. In terms of biological role, hydrolyzes a variety of proteins. This Oryctolagus cuniculus (Rabbit) protein is Gastricsin (PGC).